Consider the following 240-residue polypeptide: Ubiquinone biosynthesis O-methyltransferase (240 aa).

Positions 44, 64, 85, and 129 each coordinate S-adenosyl-L-methionine.

Belongs to the methyltransferase superfamily. UbiG/COQ3 family.

It carries out the reaction a 3-demethylubiquinol + S-adenosyl-L-methionine = a ubiquinol + S-adenosyl-L-homocysteine + H(+). It catalyses the reaction a 3-(all-trans-polyprenyl)benzene-1,2-diol + S-adenosyl-L-methionine = a 2-methoxy-6-(all-trans-polyprenyl)phenol + S-adenosyl-L-homocysteine + H(+). It functions in the pathway cofactor biosynthesis; ubiquinone biosynthesis. Functionally, O-methyltransferase that catalyzes the 2 O-methylation steps in the ubiquinone biosynthetic pathway. The sequence is that of Ubiquinone biosynthesis O-methyltransferase from Escherichia coli (strain ATCC 8739 / DSM 1576 / NBRC 3972 / NCIMB 8545 / WDCM 00012 / Crooks).